Reading from the N-terminus, the 534-residue chain is Zinc finger protein 69 homolog B (534 aa).

Residues lysine 37 and lysine 40 each participate in a glycyl lysine isopeptide (Lys-Gly) (interchain with G-Cter in SUMO2) cross-link. The 72-residue stretch at 74-145 (LTFKDVSVDF…ERDISGVPSS (72 aa)) folds into the KRAB domain. Residues lysine 178 and lysine 235 each participate in a glycyl lysine isopeptide (Lys-Gly) (interchain with G-Cter in SUMO2) cross-link. 9 consecutive C2H2-type zinc fingers follow at residues 279–301 (FECN…MRIH), 307–329 (FRCK…QRIH), 335–357 (YECK…VRIH), 363–385 (YECR…LRTH), 391–413 (FTCK…EIIH), 419–441 (YICN…QRTH), 447–469 (YKCK…QRVH), 475–497 (YECS…QRIH), and 503–525 (YDCN…CKTH).

It belongs to the krueppel C2H2-type zinc-finger protein family.

It localises to the nucleus. In terms of biological role, may be involved in transcriptional regulation. Essential for Golgi structural integrity. The sequence is that of Zinc finger protein 69 homolog B (ZFP69B) from Homo sapiens (Human).